The chain runs to 218 residues: Thiopurine S-methyltransferase (218 aa).

Positions 10, 45, 66, and 123 each coordinate S-adenosyl-L-methionine.

It belongs to the class I-like SAM-binding methyltransferase superfamily. TPMT family.

Its subcellular location is the cytoplasm. It carries out the reaction S-adenosyl-L-methionine + a thiopurine = S-adenosyl-L-homocysteine + a thiopurine S-methylether.. The protein is Thiopurine S-methyltransferase of Shewanella baltica (strain OS155 / ATCC BAA-1091).